The following is a 254-amino-acid chain: Triosephosphate isomerase (254 aa).

Asn12–Lys14 contributes to the substrate binding site. The active-site Electrophile is the His99. Glu169 (proton acceptor) is an active-site residue. Substrate contacts are provided by residues Gly175, Ser214, and Gly235–Gly236.

Belongs to the triosephosphate isomerase family. Homodimer.

It localises to the cytoplasm. The enzyme catalyses D-glyceraldehyde 3-phosphate = dihydroxyacetone phosphate. It functions in the pathway carbohydrate biosynthesis; gluconeogenesis. It participates in carbohydrate degradation; glycolysis; D-glyceraldehyde 3-phosphate from glycerone phosphate: step 1/1. Involved in the gluconeogenesis. Catalyzes stereospecifically the conversion of dihydroxyacetone phosphate (DHAP) to D-glyceraldehyde-3-phosphate (G3P). The chain is Triosephosphate isomerase from Bartonella bacilliformis (strain ATCC 35685 / KC583 / Herrer 020/F12,63).